The sequence spans 114 residues: UPF0473 protein OEOE_1164 (114 aa).

Belongs to the UPF0473 family.

This chain is UPF0473 protein OEOE_1164, found in Oenococcus oeni (strain ATCC BAA-331 / PSU-1).